The following is a 264-amino-acid chain: RNA-binding protein pos-1 (264 aa).

The disordered stretch occupies residues 56 to 82 (QDKETQNSASQPTSEQSLANRDPCTVP). Polar residues predominate over residues 61 to 74 (QNSASQPTSEQSLA). C3H1-type zinc fingers lie at residues 98-126 (AFKTALCDAYKRSQACSYGDQCRFAHGVH) and 141-169 (KYKTVLCDKFSMTGNCKYGTRCQFIHKIV). 8 residues coordinate Zn(2+): cysteine 104, cysteine 113, cysteine 119, histidine 123, cysteine 147, cysteine 156, cysteine 162, and histidine 166.

In terms of assembly, monomer.

The protein localises to the cytoplasm. In terms of biological role, RNA-binding protein that coordinates cell fate specification and differentiation during early embryogenesis. Binds to a consensus pos-1 recognition element (PRE) consisting of the sequence 5'-UA(U 2-3)RGD(N 1-3)G-3', where R is any purine, D is A, G, or U, and N is any base. The PRE motif is found within the 3' untranslated region of many maternal transcripts required for early development. Binds to the 3' untranslated region (UTR) of Notch receptor homolog glp-1, thereby repressing glp-1 translation in the posterior blastomeres in the embryo. Binding to glp-1 3' UTR excludes cell fate regulator gld-1 binding to an overlapping binding site in the glp-1 3' UTR. Binds to the neg-1 3'UTR thereby opposing neg-1 expression and cytoplasmic polyadenylation of the neg-1 mRNA poly(A) tail promoted by gld-2 and gld-3. By inhibiting the cytoplasmic lengthening of neg-1 mRNA, restricts the accumulation of neg-1 protein and promotes endo-mesoderm development in anterior blastomeres. Essential for germline specification. The sequence is that of RNA-binding protein pos-1 from Caenorhabditis elegans.